The following is a 2841-amino-acid chain: Neurofibromin (2841 aa).

An N-acetylalanine modification is found at Ala-2. Phosphoserine is present on residues Ser-866 and Ser-878. In terms of domain architecture, Ras-GAP spans His-1253 to Ile-1484. Residues Glu-1582–Lys-1740 form the CRAL-TRIO domain. The lipid binding stretch occupies residues Glu-1582–Asp-1839. Residues Ser-2190 and Ser-2469 each carry the phosphoserine modification. Thr-2516 is subject to Phosphothreonine. Ser-2517, Ser-2523, Ser-2525, and Ser-2545 each carry phosphoserine. The short motif at Lys-2557–Arg-2573 is the Bipartite nuclear localization signal element. The residue at position 2567 (Thr-2567) is a Phosphothreonine. Phosphoserine is present on residues Ser-2599, Ser-2804, and Ser-2819. The interval Ser-2786–Val-2841 is disordered. Positions Gly-2818–Ala-2829 are enriched in polar residues.

In terms of assembly, interacts with HTR6. Interacts with SPRED2. Post-translationally, ubiquitinated by RNF7/RBX2, leading to its degradation. Expressed predominantly in brain, spinal cord and testis. In terms of tissue distribution, expressed predominantly in adrenal gland, kidney, ovary and lung. As to expression, widely and more weakly expressed. Predominantly expressed in adrenal gland. Widely and more weakly expressed. Expressed mainly in testis.

Its subcellular location is the nucleus. The protein resides in the nucleolus. It localises to the cell membrane. Its function is as follows. Stimulates the GTPase activity of Ras. NF1 shows greater affinity for Ras GAP, but lower specific activity. May be a regulator of Ras activity. This chain is Neurofibromin (Nf1), found in Mus musculus (Mouse).